A 215-amino-acid polypeptide reads, in one-letter code: Cytochrome b6 (215 aa).

Residues 32–52 traverse the membrane as a helical segment; the sequence is IFYCLGGITFTCFIIQVATGF. Cys35 provides a ligand contact to heme c. Heme b-binding residues include His86 and His100. The next 3 helical transmembrane spans lie at 90-110, 116-136, and 186-206; these read ASMM…TGGF, LTWV…VTGY, and LHTF…FLMI. His187 and His202 together coordinate heme b.

Belongs to the cytochrome b family. PetB subfamily. As to quaternary structure, the 4 large subunits of the cytochrome b6-f complex are cytochrome b6, subunit IV (17 kDa polypeptide, PetD), cytochrome f and the Rieske protein, while the 4 small subunits are PetG, PetL, PetM and PetN. The complex functions as a dimer. It depends on heme b as a cofactor. The cofactor is heme c.

Its subcellular location is the plastid. The protein localises to the chloroplast thylakoid membrane. Its function is as follows. Component of the cytochrome b6-f complex, which mediates electron transfer between photosystem II (PSII) and photosystem I (PSI), cyclic electron flow around PSI, and state transitions. The sequence is that of Cytochrome b6 from Euglena gracilis.